Reading from the N-terminus, the 62-residue chain is Large ribosomal subunit protein bL32 (62 aa).

The disordered stretch occupies residues 28-62 (SIEPTTGEVHRRHHISPDGFYRGRQVIKAKEQDEE).

This sequence belongs to the bacterial ribosomal protein bL32 family.

This chain is Large ribosomal subunit protein bL32, found in Thioalkalivibrio sulfidiphilus (strain HL-EbGR7).